A 755-amino-acid chain; its full sequence is uncharacterized protein (755 aa).

Disordered stretches follow at residues 1 to 44, 72 to 91, 99 to 174, 393 to 467, 523 to 545, 584 to 672, and 734 to 755; these read MAAP…AAAQ, AEHS…ATAQ, FSLS…IPHY, TTNV…SSSR, LPKT…EGGG, VSSS…LPSG, and QAAT…PRRK. Low complexity-rich tracts occupy residues 10 to 25 and 35 to 44; these read TTTQ…TTTT and TTTGSGAAAQ. Low complexity-rich tracts occupy residues 112 to 130, 139 to 151, and 393 to 412; these read ISSS…NASS, SPDL…LSGS, and TTNV…TKST. The span at 429–446 shows a compositional bias: acidic residues; that stretch reads IEEDTIQFDDPGQGEDDN. Residues 452-462 show a composition bias toward pro residues; the sequence is NTPPPPGPPPN. Residues 536 to 545 are compositionally biased toward gly residues; it reads ATGGVTEGGG. The span at 590 to 599 shows a compositional bias: polar residues; it reads LPQPQVATTI. 2 stretches are compositionally biased toward low complexity: residues 600–666 and 740–755; these read TPQA…QTPQ and SQPS…PRRK.

This sequence belongs to the chlamydial CPn_0572/CT_456/TC_0741 family.

This is an uncharacterized protein from Chlamydia pneumoniae (Chlamydophila pneumoniae).